Reading from the N-terminus, the 269-residue chain is 1,6-dihydroxycyclohexa-2,4-diene-1-carboxylate dehydrogenase (269 aa).

An NAD(+)-binding site is contributed by 11 to 35 (VITGAAQGIGRRVAERMAAEGGRLL). Position 142 (serine 142) interacts with substrate. The active-site Proton acceptor is the tyrosine 153.

Belongs to the short-chain dehydrogenases/reductases (SDR) family. As to quaternary structure, homodimer.

It carries out the reaction (1R,6S)-1,6-dihydroxycyclohexa-2,4-diene-1-carboxylate + NAD(+) = catechol + CO2 + NADH. It participates in aromatic compound metabolism; benzoate degradation via hydroxylation; catechol from benzoate: step 2/2. Functionally, degradation of 2-hydro-1,2-dihydroxy benzoate (DHB) to catechol. This chain is 1,6-dihydroxycyclohexa-2,4-diene-1-carboxylate dehydrogenase (xylL), found in Pseudomonas putida (Arthrobacter siderocapsulatus).